Reading from the N-terminus, the 341-residue chain is Basic membrane protein B (341 aa).

The N-terminal stretch at 1 to 14 (MRIVIFILGILLTS) is a signal peptide. Residue Cys15 is the site of N-palmitoyl cysteine attachment. The S-diacylglycerol cysteine moiety is linked to residue Cys15.

Belongs to the BMP lipoprotein family. Monomer.

It is found in the cell inner membrane. May be part of an ABC-type nucleoside uptake system involved in the purine salvage pathway. The polypeptide is Basic membrane protein B (bmpB) (Borrelia garinii subsp. bavariensis (strain ATCC BAA-2496 / DSM 23469 / PBi) (Borreliella bavariensis)).